The primary structure comprises 554 residues: MESQTKFDYESLAFTKLSHSQWTDYFLSVPIDDSELDAITREIDIIKPEVRKLLSSKGDDETSKRKVLLIQSLLSLGLAFHFENEIKDILEDAFRRIDDITGDENDLSTISIMFRVFRTYGHNLPSSVFKRFTGDDGKFERSLTEDAKGILSLYEAAHLGTTTDYILDEALEFTSSHLKSLLVGGMCRPHILRLIRNTLYLPQRWNMEAVIAREYISFYEQEEDHDKMLLRLAKLNFKLLQLHYIKELKTFIKWWMELGLTSKWPSQFRERIVEAWLAGLMMYFEPQFSGGRVIAAKFNYLLTILDDACDHYFSIPELTRLVDCVERWNHDGIHTLEDISRIIFKLALDVFDDIGRGVRSKGCSYYLKEMLEELKILVRANLDLVKWARGNQLPSFEEHVEVGGIALTTYATLMYSFVGMGEAVGKEAYEWVRSRPRLIKSLAAKGRLMDDITDFESDMSNGFAANAINYYMKQFVVTKEEAILECQKMVVDINKIVNEELLKTTTVPRRVLKQALNFGRLLEVLYTKSDDIYNCSEGKLKEYIVTLLIDPIHL.

Mg(2+)-binding residues include aspartate 306, aspartate 310, aspartate 450, and aspartate 458. The short motif at 306–310 is the DDXXD motif element; that stretch reads DDACD.

It belongs to the terpene synthase family. Tpsa subfamily. Mg(2+) serves as cofactor. Mn(2+) is required as a cofactor. As to expression, predominantly expressed in roots. Expressed in the cortex and the sub-epidermal layers of roots. Also detected in leaf hydathodes and flower stigmata.

It localises to the cytoplasm. The enzyme catalyses (2E,6E)-farnesyl diphosphate = (Z)-gamma-bisabolene + diphosphate. It functions in the pathway secondary metabolite biosynthesis; terpenoid biosynthesis. Its function is as follows. Involved in sesquiterpene (C15) biosynthesis. The major product is (Z)-gamma-bisabolene with minor amounts of (E)-nerolidol and alpha-bisabolol. In Arabidopsis thaliana (Mouse-ear cress), this protein is (Z)-gamma-bisabolene synthase 2 (TPS13).